We begin with the raw amino-acid sequence, 235 residues long: Methylosome subunit pICln (235 aa).

Residues 1 to 21 (MSFLKSFPPPGSAEGLRQQQP) are disordered. Position 2 is an N-acetylserine (serine 2). A phosphoserine mark is found at serine 100, serine 142, serine 191, serine 193, serine 196, and serine 208. The tract at residues 133 to 157 (LHPDPEDEDSDDYDGEEYDVEAHEQ) is disordered. The span at 137-151 (PEDEDSDDYDGEEYD) shows a compositional bias: acidic residues. A disordered region spans residues 195–217 (SSQYNMAGVRTEDSTRDYEDGME). Over residues 204-213 (RTEDSTRDYE) the composition is skewed to basic and acidic residues. A Phosphothreonine modification is found at threonine 221.

It belongs to the pICln (TC 1.A.47) family. Component of the methylosome, a 20S complex containing at least PRMT5/SKB1, WDR77/MEP50 and CLNS1A/pICln. May mediate SNRPD1 and SNRPD3 methylation. Forms a 6S pICln-Sm complex composed of CLNS1A/pICln, SNRPD1, SNRPD2, SNRPE, SNRPF and SNRPG; ring-like structure where CLNS1A/pICln mimics additional Sm proteins and which is unable to assemble into the core snRNP. Interacts with LSM10 and LSM11.

Its subcellular location is the cytoplasm. It is found in the cytosol. It localises to the nucleus. The protein localises to the cytoskeleton. Functionally, involved in both the assembly of spliceosomal snRNPs and the methylation of Sm proteins. Chaperone that regulates the assembly of spliceosomal U1, U2, U4 and U5 small nuclear ribonucleoproteins (snRNPs), the building blocks of the spliceosome, and thereby plays an important role in the splicing of cellular pre-mRNAs. Most spliceosomal snRNPs contain a common set of Sm proteins SNRPB, SNRPD1, SNRPD2, SNRPD3, SNRPE, SNRPF and SNRPG that assemble in a heptameric protein ring on the Sm site of the small nuclear RNA to form the core snRNP (Sm core). In the cytosol, the Sm proteins SNRPD1, SNRPD2, SNRPE, SNRPF and SNRPG are trapped in an inactive 6S pICln-Sm complex by the chaperone CLNS1A that controls the assembly of the core snRNP. Dissociation by the SMN complex of CLNS1A from the trapped Sm proteins and their transfer to an SMN-Sm complex triggers the assembly of core snRNPs and their transport to the nucleus. This is Methylosome subunit pICln (CLNS1A) from Canis lupus familiaris (Dog).